A 232-amino-acid polypeptide reads, in one-letter code: Large ribosomal subunit protein uL1 (232 aa).

This sequence belongs to the universal ribosomal protein uL1 family. As to quaternary structure, part of the 50S ribosomal subunit.

In terms of biological role, binds directly to 23S rRNA. The L1 stalk is quite mobile in the ribosome, and is involved in E site tRNA release. Functionally, protein L1 is also a translational repressor protein, it controls the translation of the L11 operon by binding to its mRNA. The chain is Large ribosomal subunit protein uL1 from Coxiella burnetii (strain RSA 331 / Henzerling II).